The following is a 525-amino-acid chain: GMP synthase [glutamine-hydrolyzing] (525 aa).

In terms of domain architecture, Glutamine amidotransferase type-1 spans 9–207 (RILILDFGSQ…VRDICQCEAL (199 aa)). Cysteine 86 acts as the Nucleophile in catalysis. Residues histidine 181 and glutamate 183 contribute to the active site. A GMPS ATP-PPase domain is found at 208-400 (WTPAKIIDDA…LGLPYDMLYR (193 aa)). 235-241 (SGGVDSS) is a binding site for ATP.

As to quaternary structure, homodimer.

It catalyses the reaction XMP + L-glutamine + ATP + H2O = GMP + L-glutamate + AMP + diphosphate + 2 H(+). It functions in the pathway purine metabolism; GMP biosynthesis; GMP from XMP (L-Gln route): step 1/1. Its function is as follows. Catalyzes the synthesis of GMP from XMP. The protein is GMP synthase [glutamine-hydrolyzing] of Shigella dysenteriae serotype 1 (strain Sd197).